Consider the following 30-residue polypeptide: Kalata-B16 (30 aa).

The cyclopeptide (Gly-Asp) cross-link spans 1 to 30 (GIPCAESCVYIPCTITALLGCKCQDKVCYD). 3 disulfides stabilise this stretch: C4-C21, C8-C23, and C13-C28.

Post-translationally, this is a cyclic peptide.

Probably participates in a plant defense mechanism. The protein is Kalata-B16 of Oldenlandia affinis.